The chain runs to 417 residues: NADH-quinone oxidoreductase subunit D (417 aa).

It belongs to the complex I 49 kDa subunit family. NDH-1 is composed of 14 different subunits. Subunits NuoB, C, D, E, F, and G constitute the peripheral sector of the complex.

It is found in the cell inner membrane. The catalysed reaction is a quinone + NADH + 5 H(+)(in) = a quinol + NAD(+) + 4 H(+)(out). Its function is as follows. NDH-1 shuttles electrons from NADH, via FMN and iron-sulfur (Fe-S) centers, to quinones in the respiratory chain. The immediate electron acceptor for the enzyme in this species is believed to be ubiquinone. Couples the redox reaction to proton translocation (for every two electrons transferred, four hydrogen ions are translocated across the cytoplasmic membrane), and thus conserves the redox energy in a proton gradient. The sequence is that of NADH-quinone oxidoreductase subunit D from Cupriavidus metallidurans (strain ATCC 43123 / DSM 2839 / NBRC 102507 / CH34) (Ralstonia metallidurans).